The sequence spans 406 residues: Cysteine desulfurase (406 aa).

At Lys-226 the chain carries N6-(pyridoxal phosphate)lysine. Cys-364 functions as the Cysteine persulfide intermediate in the catalytic mechanism.

It belongs to the class-V pyridoxal-phosphate-dependent aminotransferase family. Csd subfamily. Homodimer. Interacts with SufE and the SufBCD complex composed of SufB, SufC and SufD. The interaction with SufE is required to mediate the direct transfer of the sulfur atom from the S-sulfanylcysteine. Pyridoxal 5'-phosphate serves as cofactor.

Its subcellular location is the cytoplasm. The enzyme catalyses (sulfur carrier)-H + L-cysteine = (sulfur carrier)-SH + L-alanine. The catalysed reaction is L-selenocysteine + AH2 = hydrogenselenide + L-alanine + A + H(+). It functions in the pathway cofactor biosynthesis; iron-sulfur cluster biosynthesis. In terms of biological role, cysteine desulfurases mobilize the sulfur from L-cysteine to yield L-alanine, an essential step in sulfur metabolism for biosynthesis of a variety of sulfur-containing biomolecules. Component of the suf operon, which is activated and required under specific conditions such as oxidative stress and iron limitation. Acts as a potent selenocysteine lyase in vitro, that mobilizes selenium from L-selenocysteine. Selenocysteine lyase activity is however unsure in vivo. This chain is Cysteine desulfurase, found in Klebsiella pneumoniae subsp. pneumoniae (strain ATCC 700721 / MGH 78578).